The following is a 582-amino-acid chain: Semenogelin-2 (582 aa).

The N-terminal stretch at 1-23 (MKSIILFVLSLLLILEKQAAVMG) is a signal peptide. 5 disordered regions span residues 25-65 (KGGS…SSSI), 91-157 (HKTT…GISS), 171-192 (LSKE…GSQS), 272-366 (NLNQ…KDIQ), and 393-557 (SNQD…HNTV). The span at 50-59 (GQKDKQHTES) shows a compositional bias: basic and acidic residues. The span at 111 to 134 (QKGRDHVKPKRHFRLIVIHRKGGQ) shows a compositional bias: basic residues. Polar residues-rich tracts occupy residues 137 to 157 (HGTQ…GISS) and 174 to 192 (EQAS…GSQS). The segment covering 293–310 (TEERQFNHGEKSVQKDVP) has biased composition (basic and acidic residues). Polar residues predominate over residues 325–335 (KSQNQVSIPSQ). 4 stretches are compositionally biased toward basic and acidic residues: residues 336-345 (DQEHGHKENK), 353-366 (TEER…KDIQ), 396-405 (DQEHGHKENK), and 413-426 (TEER…KDIQ). 2 stretches are compositionally biased toward polar residues: residues 427 to 437 (KSVSKGSISIQ) and 445 to 455 (KSQNQVTIPSQ). The span at 456–465 (DQEHGHKENK) shows a compositional bias: basic and acidic residues. Composition is skewed to polar residues over residues 487–498 (KDVSQSSLSFQT) and 506–529 (SQIQ…NSGK). The span at 530-546 (SADREQDLLSHEQESRY) shows a compositional bias: basic and acidic residues. The span at 547-557 (QQKSSGAHNTV) shows a compositional bias: polar residues.

Belongs to the semenogelin family. As to quaternary structure, interacts with SERPINA5.

It localises to the secreted. Functionally, participates in the formation of a gel matrix (sperm coagulum) entrapping the accessory gland secretions and ejaculated spermatozoa. The chain is Semenogelin-2 (SEMG2) from Colobus guereza (Mantled guereza).